The chain runs to 155 residues: NADPH-dependent 7-cyano-7-deazaguanine reductase (155 aa).

Cys-52 functions as the Thioimide intermediate in the catalytic mechanism. Asp-59 serves as the catalytic Proton donor. Residues 74-76 (VES) and 93-94 (HE) contribute to the substrate site.

Belongs to the GTP cyclohydrolase I family. QueF type 1 subfamily.

Its subcellular location is the cytoplasm. It catalyses the reaction 7-aminomethyl-7-carbaguanine + 2 NADP(+) = 7-cyano-7-deazaguanine + 2 NADPH + 3 H(+). It participates in tRNA modification; tRNA-queuosine biosynthesis. In terms of biological role, catalyzes the NADPH-dependent reduction of 7-cyano-7-deazaguanine (preQ0) to 7-aminomethyl-7-deazaguanine (preQ1). The sequence is that of NADPH-dependent 7-cyano-7-deazaguanine reductase from Syntrophobacter fumaroxidans (strain DSM 10017 / MPOB).